The following is a 125-amino-acid chain: Testis-specific protein LINC02914 (125 aa).

Residues 1 to 12 (MHRKEPGARLEA) show a composition bias toward basic and acidic residues. The tract at residues 1–45 (MHRKEPGARLEATRGAARPHKQGTKPMITRPSVSQLGEGKCPSSQ) is disordered.

Expressed in testes and ejaculated spermatozoa (at protein level).

It localises to the cytoplasm. It is found in the nucleus. The protein resides in the cell projection. The protein localises to the cilium. Its subcellular location is the flagellum. Functionally, may play a role in the flagellum biology. In Homo sapiens (Human), this protein is Testis-specific protein LINC02914.